The sequence spans 188 residues: UPF0340 protein BH3766 (188 aa).

This sequence belongs to the UPF0340 family.

The polypeptide is UPF0340 protein BH3766 (Halalkalibacterium halodurans (strain ATCC BAA-125 / DSM 18197 / FERM 7344 / JCM 9153 / C-125) (Bacillus halodurans)).